A 379-amino-acid polypeptide reads, in one-letter code: 8-amino-7-oxononanoate synthase (379 aa).

The substrate site is built by Arg-27 and Arg-34. A pyridoxal 5'-phosphate-binding site is contributed by 114 to 115 (GY). His-139 contacts substrate. Pyridoxal 5'-phosphate is bound by residues Ser-187, 212–215 (DDAH), and 232–235 (TLSK). Lys-235 bears the N6-(pyridoxal phosphate)lysine mark. Residue Thr-344 coordinates substrate.

It belongs to the class-II pyridoxal-phosphate-dependent aminotransferase family. BioF subfamily. As to quaternary structure, homodimer. The cofactor is pyridoxal 5'-phosphate.

The catalysed reaction is 6-carboxyhexanoyl-[ACP] + L-alanine + H(+) = (8S)-8-amino-7-oxononanoate + holo-[ACP] + CO2. Its pathway is cofactor biosynthesis; biotin biosynthesis. In terms of biological role, catalyzes the decarboxylative condensation of pimeloyl-[acyl-carrier protein] and L-alanine to produce 8-amino-7-oxononanoate (AON), [acyl-carrier protein], and carbon dioxide. This is 8-amino-7-oxononanoate synthase from Methylobacterium nodulans (strain LMG 21967 / CNCM I-2342 / ORS 2060).